Here is a 239-residue protein sequence, read N- to C-terminus: MARTKKANDEVPTNSDSLKLKVAKQAAKLVKDEMVVGLGSGSTANLFIQELGKRIVEEELYIYGVPTSFDSRMVASTAGIPLISLDQCGEIDIAVDGADEVCKSTLSLIKGGGGCHTMEKIVDYHAKEFIVLADEGKLVDSLGDKTPVPLEVIPFAYSTVLNKLLKMNTAPAIRTGSGKMGPVITDSGNMIIDVFISIDDAEETENMLNNIPGVLENGVFSKCDKVLVGTSKKVEILKK.

Substrate-binding positions include 40-43 (SGST), 96-99 (DGAD), and 110-113 (KGGG). The Proton acceptor role is filled by glutamate 119. Lysine 137 serves as a coordination point for substrate.

Belongs to the ribose 5-phosphate isomerase family. Homodimer.

The catalysed reaction is aldehydo-D-ribose 5-phosphate = D-ribulose 5-phosphate. It functions in the pathway carbohydrate degradation; pentose phosphate pathway; D-ribose 5-phosphate from D-ribulose 5-phosphate (non-oxidative stage): step 1/1. In terms of biological role, catalyzes the reversible conversion of ribose-5-phosphate to ribulose 5-phosphate. The chain is Ribose-5-phosphate isomerase A from Methanococcus maripaludis (strain C5 / ATCC BAA-1333).